The chain runs to 272 residues: Shikimate dehydrogenase (NADP(+)) (272 aa).

Residues 14–16 (SKS) and T61 contribute to the shikimate site. K65 serves as the catalytic Proton acceptor. E77 provides a ligand contact to NADP(+). N86 and D102 together coordinate shikimate. Residues 126–130 (GAGGA), 149–154 (NRTVSR), and M213 each bind NADP(+). Y215 lines the shikimate pocket. An NADP(+)-binding site is contributed by G237.

This sequence belongs to the shikimate dehydrogenase family. Homodimer.

It catalyses the reaction shikimate + NADP(+) = 3-dehydroshikimate + NADPH + H(+). The protein operates within metabolic intermediate biosynthesis; chorismate biosynthesis; chorismate from D-erythrose 4-phosphate and phosphoenolpyruvate: step 4/7. Its function is as follows. Involved in the biosynthesis of the chorismate, which leads to the biosynthesis of aromatic amino acids. Catalyzes the reversible NADPH linked reduction of 3-dehydroshikimate (DHSA) to yield shikimate (SA). The protein is Shikimate dehydrogenase (NADP(+)) of Shigella dysenteriae serotype 1 (strain Sd197).